Reading from the N-terminus, the 359-residue chain is UPF0284 protein MAE_56900 (359 aa).

The protein belongs to the UPF0284 family.

This is UPF0284 protein MAE_56900 from Microcystis aeruginosa (strain NIES-843 / IAM M-2473).